The sequence spans 386 residues: Succinate--CoA ligase [ADP-forming] subunit beta (386 aa).

The ATP-grasp domain occupies 9-244 (KELLREFGVA…TTEEDPREVE (236 aa)). Residues lysine 46, 53–55 (GRG), glutamate 99, serine 102, and glutamate 107 each bind ATP. Mg(2+) is bound by residues asparagine 199 and aspartate 213. Substrate-binding positions include asparagine 264 and 321-323 (GIM).

The protein belongs to the succinate/malate CoA ligase beta subunit family. As to quaternary structure, heterotetramer of two alpha and two beta subunits. It depends on Mg(2+) as a cofactor.

The catalysed reaction is succinate + ATP + CoA = succinyl-CoA + ADP + phosphate. It catalyses the reaction GTP + succinate + CoA = succinyl-CoA + GDP + phosphate. It functions in the pathway carbohydrate metabolism; tricarboxylic acid cycle; succinate from succinyl-CoA (ligase route): step 1/1. Succinyl-CoA synthetase functions in the citric acid cycle (TCA), coupling the hydrolysis of succinyl-CoA to the synthesis of either ATP or GTP and thus represents the only step of substrate-level phosphorylation in the TCA. The beta subunit provides nucleotide specificity of the enzyme and binds the substrate succinate, while the binding sites for coenzyme A and phosphate are found in the alpha subunit. This is Succinate--CoA ligase [ADP-forming] subunit beta from Exiguobacterium sp. (strain ATCC BAA-1283 / AT1b).